Consider the following 297-residue polypeptide: HTH-type transcriptional regulator ArgP (297 aa).

The HTH lysR-type domain occupies 4-60 (PDYRTLQALDAVIRERGFERAAQKLCITQSAVSQRIKQLENMFGQPLLVRTVPPRPT). Residues 21–40 (FERAAQKLCITQSAVSQRIK) constitute a DNA-binding region (H-T-H motif).

Belongs to the LysR transcriptional regulatory family. Homodimer.

Controls the transcription of genes involved in arginine and lysine metabolism. This chain is HTH-type transcriptional regulator ArgP, found in Klebsiella pneumoniae subsp. pneumoniae (strain ATCC 700721 / MGH 78578).